The chain runs to 147 residues: SsrA-binding protein (147 aa).

It belongs to the SmpB family.

The protein resides in the cytoplasm. Required for rescue of stalled ribosomes mediated by trans-translation. Binds to transfer-messenger RNA (tmRNA), required for stable association of tmRNA with ribosomes. tmRNA and SmpB together mimic tRNA shape, replacing the anticodon stem-loop with SmpB. tmRNA is encoded by the ssrA gene; the 2 termini fold to resemble tRNA(Ala) and it encodes a 'tag peptide', a short internal open reading frame. During trans-translation Ala-aminoacylated tmRNA acts like a tRNA, entering the A-site of stalled ribosomes, displacing the stalled mRNA. The ribosome then switches to translate the ORF on the tmRNA; the nascent peptide is terminated with the 'tag peptide' encoded by the tmRNA and targeted for degradation. The ribosome is freed to recommence translation, which seems to be the essential function of trans-translation. In Mycoplasma pneumoniae (strain ATCC 29342 / M129 / Subtype 1) (Mycoplasmoides pneumoniae), this protein is SsrA-binding protein.